Consider the following 517-residue polypeptide: Xyloglucan galactosyltransferase XLT2 (517 aa).

The interval 1–31 (MLPVSNPSSPEHLLKKSRTPDSTTSIDRKNS) is disordered. The Cytoplasmic segment spans residues 1–49 (MLPVSNPSSPEHLLKKSRTPDSTTSIDRKNSFNSLHSVGNRSSYIAASR). The span at 20-31 (PDSTTSIDRKNS) shows a compositional bias: polar residues. A helical; Signal-anchor for type II membrane protein transmembrane segment spans residues 50 to 70 (SHCTWLILSLLSLQLILFLTL). Topologically, residues 71–517 (RSIPFPHRHI…KEQEKWYKWR (447 aa)) are lumenal. Residues Asn250, Asn288, Asn377, and Asn449 are each glycosylated (N-linked (GlcNAc...) asparagine).

Belongs to the glycosyltransferase 47 family. Interacts with CSLC4, FUT1, XXT2 and XXT5. Expressed in roots, hypocotyls, cotyledons, leaves, stems and flowers.

The protein resides in the golgi apparatus membrane. Functionally, functions in xyloglucan synthesis by adding side chains to the xylosylated glucan backbone. Involved in galactosylating hemicellulose xyloglucan (XyG) at the second position of the XXXG motif to form XLXG. Associates with other xyloglucan-synthesizing enzymes to form multiprotein complexes for xyloglucan synthesis in the Golgi. This Arabidopsis thaliana (Mouse-ear cress) protein is Xyloglucan galactosyltransferase XLT2.